A 210-amino-acid polypeptide reads, in one-letter code: Adenylate kinase (210 aa).

ATP is bound at residue 10-15; that stretch reads GSGKGT. Positions 30–54 are NMP; it reads SCGDILRKQNKCCDINKLIKKGELI. Residues Arg36, 52–54, 80–83, and Gln87 each bind AMP; these read ELI and GFPR. Residues 117 to 154 form an LID region; that stretch reads GRIIDKVSGEIYHLKFNPPKFITEKSNKNKILVRRLDD. Residues Arg118 and 127–128 each bind ATP; that span reads IY. Residues Arg151 and Arg162 each coordinate AMP. An ATP-binding site is contributed by Phe195.

Belongs to the adenylate kinase family. As to quaternary structure, monomer.

It localises to the cytoplasm. The catalysed reaction is AMP + ATP = 2 ADP. Its pathway is purine metabolism; AMP biosynthesis via salvage pathway; AMP from ADP: step 1/1. In terms of biological role, catalyzes the reversible transfer of the terminal phosphate group between ATP and AMP. Plays an important role in cellular energy homeostasis and in adenine nucleotide metabolism. This Wigglesworthia glossinidia brevipalpis protein is Adenylate kinase.